We begin with the raw amino-acid sequence, 143 residues long: Large ribosomal subunit protein uL11 (143 aa).

The protein belongs to the universal ribosomal protein uL11 family. In terms of assembly, part of the ribosomal stalk of the 50S ribosomal subunit. Interacts with L10 and the large rRNA to form the base of the stalk. L10 forms an elongated spine to which L12 dimers bind in a sequential fashion forming a multimeric L10(L12)X complex. In terms of processing, one or more lysine residues are methylated.

Its function is as follows. Forms part of the ribosomal stalk which helps the ribosome interact with GTP-bound translation factors. The chain is Large ribosomal subunit protein uL11 from Chromohalobacter salexigens (strain ATCC BAA-138 / DSM 3043 / CIP 106854 / NCIMB 13768 / 1H11).